We begin with the raw amino-acid sequence, 267 residues long: MNRKKTIIDIQKMKAAGEKITVLTSYDYPFTRVMDECGIDMILIGDSVGVVFSGYDNTLPVTMDEMIYHTRAVVRARPKALVVADMPFLSYQTDLRDARLNAGRLVKDGGAEAVKLEGGSHVADTIRAIVDMDIPVMAHIGLTPQSIHRMGGYKVQGKKEEQSQRLLDDAKAIEEAGAFAVVLEGIPLKLAEKITEELSIPTIGIGAGPHCDGQVLVIHDILGLCEKYSPKFVKRYGDANALITSAVSSYIAEVKKGEFPDEGHSFS.

Mg(2+) is bound by residues Asp46 and Asp85. 3-methyl-2-oxobutanoate is bound by residues 46–47, Asp85, and Lys115; that span reads DS. A Mg(2+)-binding site is contributed by Glu117. The active-site Proton acceptor is Glu184.

Belongs to the PanB family. As to quaternary structure, homodecamer; pentamer of dimers. Requires Mg(2+) as cofactor.

It is found in the cytoplasm. The enzyme catalyses 3-methyl-2-oxobutanoate + (6R)-5,10-methylene-5,6,7,8-tetrahydrofolate + H2O = 2-dehydropantoate + (6S)-5,6,7,8-tetrahydrofolate. It participates in cofactor biosynthesis; (R)-pantothenate biosynthesis; (R)-pantoate from 3-methyl-2-oxobutanoate: step 1/2. Catalyzes the reversible reaction in which hydroxymethyl group from 5,10-methylenetetrahydrofolate is transferred onto alpha-ketoisovalerate to form ketopantoate. This is 3-methyl-2-oxobutanoate hydroxymethyltransferase from Geobacter metallireducens (strain ATCC 53774 / DSM 7210 / GS-15).